The following is a 396-amino-acid chain: Phosphoglycerate kinase (396 aa).

Substrate-binding positions include 21–23 (DFN), Arg36, 59–62 (HLGK), Arg119, and Arg156. ATP-binding positions include Lys206, Gly294, Glu325, and 352 to 355 (GGDS).

It belongs to the phosphoglycerate kinase family. As to quaternary structure, monomer.

Its subcellular location is the cytoplasm. It catalyses the reaction (2R)-3-phosphoglycerate + ATP = (2R)-3-phospho-glyceroyl phosphate + ADP. It functions in the pathway carbohydrate degradation; glycolysis; pyruvate from D-glyceraldehyde 3-phosphate: step 2/5. This chain is Phosphoglycerate kinase, found in Listeria monocytogenes serotype 4b (strain CLIP80459).